The following is a 154-amino-acid chain: MGLSDGEWQLVLNVWGKVEADVAGHGQEVLIRLFKGHPETLEKFDKFKHLKTEDEMKASEDLKKHGNTVLSALGGILKKKGQHEAEIKPLAQSHATKHKIPVKYLEFISEAIIQVLQSKHPGDFGADAQAAMSKALELFRNDIAAKYKELGFQG.

A Globin domain is found at 2–148 (GLSDGEWQLV…FRNDIAAKYK (147 aa)). S4 carries the post-translational modification Phosphoserine. H65 provides a ligand contact to nitrite. H65 contributes to the O2 binding site. Residue T68 is modified to Phosphothreonine. Residue H94 participates in heme b binding.

This sequence belongs to the globin family. In terms of assembly, monomeric.

The protein resides in the cytoplasm. The protein localises to the sarcoplasm. The enzyme catalyses Fe(III)-heme b-[protein] + nitric oxide + H2O = Fe(II)-heme b-[protein] + nitrite + 2 H(+). The catalysed reaction is H2O2 + AH2 = A + 2 H2O. Monomeric heme protein which primary function is to store oxygen and facilitate its diffusion within muscle tissues. Reversibly binds oxygen through a pentacoordinated heme iron and enables its timely and efficient release as needed during periods of heightened demand. Depending on the oxidative conditions of tissues and cells, and in addition to its ability to bind oxygen, it also has a nitrite reductase activity whereby it regulates the production of bioactive nitric oxide. Under stress conditions, like hypoxia and anoxia, it also protects cells against reactive oxygen species thanks to its pseudoperoxidase activity. This chain is Myoglobin (MB), found in Tupaia glis (Common tree shrew).